A 246-amino-acid chain; its full sequence is Pyridoxine 5'-phosphate synthase (246 aa).

Residue asparagine 6 coordinates 3-amino-2-oxopropyl phosphate. 8-9 is a binding site for 1-deoxy-D-xylulose 5-phosphate; it reads DH. Arginine 17 provides a ligand contact to 3-amino-2-oxopropyl phosphate. The Proton acceptor role is filled by histidine 49. Positions 51 and 56 each coordinate 1-deoxy-D-xylulose 5-phosphate. Glutamate 76 functions as the Proton acceptor in the catalytic mechanism. Threonine 106 contributes to the 1-deoxy-D-xylulose 5-phosphate binding site. Histidine 196 functions as the Proton donor in the catalytic mechanism. Residues glycine 197 and 219–220 contribute to the 3-amino-2-oxopropyl phosphate site; that span reads GH.

The protein belongs to the PNP synthase family. As to quaternary structure, homooctamer; tetramer of dimers.

The protein resides in the cytoplasm. It carries out the reaction 3-amino-2-oxopropyl phosphate + 1-deoxy-D-xylulose 5-phosphate = pyridoxine 5'-phosphate + phosphate + 2 H2O + H(+). It participates in cofactor biosynthesis; pyridoxine 5'-phosphate biosynthesis; pyridoxine 5'-phosphate from D-erythrose 4-phosphate: step 5/5. Functionally, catalyzes the complicated ring closure reaction between the two acyclic compounds 1-deoxy-D-xylulose-5-phosphate (DXP) and 3-amino-2-oxopropyl phosphate (1-amino-acetone-3-phosphate or AAP) to form pyridoxine 5'-phosphate (PNP) and inorganic phosphate. The sequence is that of Pyridoxine 5'-phosphate synthase from Akkermansia muciniphila (strain ATCC BAA-835 / DSM 22959 / JCM 33894 / BCRC 81048 / CCUG 64013 / CIP 107961 / Muc).